The sequence spans 119 residues: Beta-2-microglobulin (119 aa).

Positions methionine 1–alanine 20 are cleaved as a signal peptide. The Ig-like C1-type domain maps to proline 25–lysine 114. A disulfide bridge connects residues cysteine 45 and cysteine 100.

It belongs to the beta-2-microglobulin family. Heterodimer of an alpha chain and a beta chain. Beta-2-microglobulin is the beta-chain of major histocompatibility complex class I molecules.

The protein resides in the secreted. In terms of biological role, component of the class I major histocompatibility complex (MHC). Involved in the presentation of peptide antigens to the immune system. This chain is Beta-2-microglobulin (B2M), found in Leontopithecus chrysopygus (Golden-rumped lion tamarin).